The following is a 161-amino-acid chain: Globin CTT-VIIB-10 (161 aa).

The first 16 residues, 1 to 16 (MKFFAVLALCIVGAIA), serve as a signal peptide directing secretion. The Globin domain occupies 18–161 (PLTADEASLV…NTFAIVVPRL (144 aa)). Residues histidine 76 and histidine 111 each coordinate heme b.

Belongs to the globin family. In terms of assembly, homodimer.

This is Globin CTT-VIIB-10 (CTT-7B10) from Chironomus thummi thummi (Midge).